Consider the following 439-residue polypeptide: Xylose isomerase (439 aa).

Active-site residues include H101 and D104. The Mg(2+) site is built by E232, E268, H271, D296, D307, D309, and D339.

The protein belongs to the xylose isomerase family. In terms of assembly, homotetramer. Requires Mg(2+) as cofactor.

It is found in the cytoplasm. It catalyses the reaction alpha-D-xylose = alpha-D-xylulofuranose. The protein is Xylose isomerase (xylA) of Thermoanaerobacterium saccharolyticum.